The sequence spans 248 residues: MKRIVLIRHGESLWNKENRFTGWTDVDLSEKGIEEAKKAGELMKKEGFQFTKAYTSYLKRAVKTLNGVLDVMDLDWIPVEKTWRLNEKHYGMLQGLNKAETAEKYGDEQVLIWRRSYDVPPTPMEKEDPRSPFMDPRYKGVCEKDLPLTEALCDTVNRILPYWNETIFPTLKEHDEVLVAAHGNSLRGIIKVLKNISDEDIISLNLPTAVPYVFEFDDNLRLVKDYFLGDPEEIKKLMEAVANQGKKK.

Substrate-binding positions include 8-15 (RHGESLWN), 21-22 (TG), Arg-60, 87-90 (EKHY), Lys-98, 114-115 (RR), and 183-184 (GN). The Tele-phosphohistidine intermediate role is filled by His-9. Glu-87 functions as the Proton donor/acceptor in the catalytic mechanism.

The protein belongs to the phosphoglycerate mutase family. BPG-dependent PGAM subfamily.

It carries out the reaction (2R)-2-phosphoglycerate = (2R)-3-phosphoglycerate. Its pathway is carbohydrate degradation; glycolysis; pyruvate from D-glyceraldehyde 3-phosphate: step 3/5. In terms of biological role, catalyzes the interconversion of 2-phosphoglycerate and 3-phosphoglycerate. The polypeptide is 2,3-bisphosphoglycerate-dependent phosphoglycerate mutase (Porphyromonas gingivalis (strain ATCC 33277 / DSM 20709 / CIP 103683 / JCM 12257 / NCTC 11834 / 2561)).